Here is a 300-residue protein sequence, read N- to C-terminus: Cation-efflux pump FieF (300 aa).

Helical transmembrane passes span 11 to 31, 40 to 60, 81 to 101, and 114 to 134; these read LAAV…VFAW, LASL…LLVV, LAAL…ILTG, and PEVG…LVSF. The Zn(2+) site is built by aspartate 45 and aspartate 49. The Zn(2+) site is built by histidine 153 and aspartate 157. The next 2 helical transmembrane spans lie at 156 to 176 and 182 to 202; these read SDLL…KGIT and FALG…YDAV.

This sequence belongs to the cation diffusion facilitator (CDF) transporter (TC 2.A.4) family. FieF subfamily. Homodimer.

Its subcellular location is the cell inner membrane. It catalyses the reaction Zn(2+)(in) + H(+)(out) = Zn(2+)(out) + H(+)(in). The catalysed reaction is Cd(2+)(in) + H(+)(out) = Cd(2+)(out) + H(+)(in). It carries out the reaction Fe(2+)(in) + H(+)(out) = Fe(2+)(out) + H(+)(in). Its function is as follows. Divalent metal cation transporter which exports Zn(2+), Cd(2+) and possibly Fe(2+). May be involved in zinc and iron detoxification by efflux. This is Cation-efflux pump FieF from Pectobacterium carotovorum subsp. carotovorum (strain PC1).